A 938-amino-acid polypeptide reads, in one-letter code: Protein translocase subunit SecA (938 aa).

ATP-binding positions include Gln90, 108–112 (GEGKT), and Asp504.

Belongs to the SecA family. In terms of assembly, monomer and homodimer. Part of the essential Sec protein translocation apparatus which comprises SecA, SecYEG and auxiliary proteins SecDF. Other proteins may also be involved.

It localises to the cell inner membrane. The protein localises to the cellular thylakoid membrane. The protein resides in the cytoplasm. The catalysed reaction is ATP + H2O + cellular proteinSide 1 = ADP + phosphate + cellular proteinSide 2.. In terms of biological role, part of the Sec protein translocase complex. Interacts with the SecYEG preprotein conducting channel. Has a central role in coupling the hydrolysis of ATP to the transfer of proteins into and across the cell membrane, serving as an ATP-driven molecular motor driving the stepwise translocation of polypeptide chains across the membrane. Functionally, probably participates in protein translocation into and across both the cytoplasmic and thylakoid membranes in cyanobacterial cells. This is Protein translocase subunit SecA from Microcystis aeruginosa (strain NIES-843 / IAM M-2473).